Consider the following 883-residue polypeptide: Translation initiation factor IF-2 (883 aa).

The interval valine 118–glutamate 261 is disordered. The segment covering alanine 124 to alanine 150 has biased composition (low complexity). Composition is skewed to basic and acidic residues over residues proline 183–isoleucine 200 and lysine 252–glutamate 261. The tr-type G domain maps to lysine 383–lysine 552. Residues glycine 392–threonine 399 form a G1 region. Glycine 392–threonine 399 contributes to the GTP binding site. Residues glycine 417–histidine 421 are G2. Residues aspartate 438 to glycine 441 form a G3 region. GTP is bound by residues aspartate 438–histidine 442 and asparagine 492–aspartate 495. A G4 region spans residues asparagine 492 to aspartate 495. Residues serine 528–lysine 530 are G5.

It belongs to the TRAFAC class translation factor GTPase superfamily. Classic translation factor GTPase family. IF-2 subfamily.

Its subcellular location is the cytoplasm. Functionally, one of the essential components for the initiation of protein synthesis. Protects formylmethionyl-tRNA from spontaneous hydrolysis and promotes its binding to the 30S ribosomal subunits. Also involved in the hydrolysis of GTP during the formation of the 70S ribosomal complex. This chain is Translation initiation factor IF-2, found in Geobacter sulfurreducens (strain ATCC 51573 / DSM 12127 / PCA).